The following is a 485-amino-acid chain: Dipeptide and tripeptide permease C (485 aa).

The Cytoplasmic portion of the chain corresponds to 1 to 12; that stretch reads MKTPSQPRAIYY. A helical membrane pass occupies residues 13-33; that stretch reads IVAIQIWEYFSFYGMRALLIL. Over 34 to 46 the chain is Periplasmic; that stretch reads YLTHQLGFDDNHA. A helical membrane pass occupies residues 47 to 67; it reads ISLFSAYASLVYVTPILGGWL. At 68–70 the chain is on the cytoplasmic side; that stretch reads ADR. Residues 71 to 93 form a helical membrane-spanning segment; that stretch reads LLGNRTAVIAGALLMTLGHVVLG. Residues 94–102 lie on the Periplasmic side of the membrane; that stretch reads IDTNSTFSL. Residues 103–125 traverse the membrane as a helical segment; that stretch reads YLALAIIICGYGLFKSNISCLLG. Residues 126-140 lie on the Cytoplasmic side of the membrane; the sequence is ELYDENDHRRDGGFS. A helical transmembrane segment spans residues 141 to 161; it reads LLYAAGNIGSIAAPIACGLAA. The Periplasmic segment spans residues 162 to 164; sequence QWY. The helical transmembrane segment at 165 to 185 threads the bilayer; it reads GWHVGFALAGGGMFIGLLIFL. Residues 186 to 208 are Cytoplasmic-facing; the sequence is SGHRHFQSTRSMDKKALTSVKFA. Residues 209–229 form a helical membrane-spanning segment; that stretch reads LPVWSWLVVMLCLAPVFFTLL. Over 230–234 the chain is Periplasmic; that stretch reads LENDW. The chain crosses the membrane as a helical span at residues 235 to 255; sequence SGYLLAIVCLIAAQIIARMMI. The Cytoplasmic segment spans residues 256-262; the sequence is KFPEHRR. Residues 263–283 form a helical membrane-spanning segment; it reads ALWQIVLLMFVGTLFWVLAQQ. The Periplasmic portion of the chain corresponds to 284–307; the sequence is GGSTISLFIDRFVNRQAFNIEVPT. Residues 308–328 form a helical membrane-spanning segment; that stretch reads ALFQSVNAIAVMLAGVVLAWL. The Cytoplasmic portion of the chain corresponds to 329–340; the sequence is ASPESRGNSTLR. Residues 341–361 form a helical membrane-spanning segment; it reads VWLKFAFGLLLMACGFMLLAF. The Periplasmic segment spans residues 362–375; it reads DARHAAADGQASMG. The helical transmembrane segment at 376-396 threads the bilayer; sequence VMISGLALMGFAELFIDPVAI. Topologically, residues 397-406 are cytoplasmic; it reads AQITRLKMSG. Residues 407–427 form a helical membrane-spanning segment; it reads VLTGIYMLATGAVANWLAGVV. Residues 428 to 446 lie on the Periplasmic side of the membrane; it reads AQQTTESQISGMAIAAYQR. Residues 447–467 traverse the membrane as a helical segment; that stretch reads FFSQMGEWTLACVAIIVVLAF. Residues 468-485 lie on the Cytoplasmic side of the membrane; it reads ATRFLFSTPTNMIQESND.

Belongs to the major facilitator superfamily. Proton-dependent oligopeptide transporter (POT/PTR) (TC 2.A.17) family. In terms of assembly, monomer.

The protein localises to the cell inner membrane. In terms of biological role, proton-dependent permease that transports di- and tripeptides. Shows significantly higher specificity towards dipeptides than tripeptides. Has a preference for dipeptides with a C-terminal Lys residue. Can bind Ala-Lys, Lys-Ala, Ala-Ala. Can also transport alanine and trialanine. The chain is Dipeptide and tripeptide permease C from Escherichia coli (strain K12).